Here is a 186-residue protein sequence, read N- to C-terminus: Protein FAM219A (186 aa).

Disordered regions lie at residues 1–47 and 59–132; these read MMEE…NYKP and ELAR…GYSS. The span at 67–81 shows a compositional bias: polar residues; the sequence is KNGTVGSPVNQQPKK. Residues 123–132 show a composition bias toward low complexity; sequence SRYSSSGYSS.

This sequence belongs to the FAM219 family.

This chain is Protein FAM219A (fam219a), found in Danio rerio (Zebrafish).